The primary structure comprises 278 residues: uncharacterized protein (278 aa).

Positions 1–20 (MSPLIVGTLIIILLSGLATA) are cleaved as a signal peptide. Gly-96 carries GPI-anchor amidated glycine lipidation. Residues 97–278 (TFLTSPTAKR…QLIMQTFNGS (182 aa)) constitute a propeptide, removed in mature form.

The protein localises to the cell membrane. This is an uncharacterized protein from Schizosaccharomyces pombe (strain 972 / ATCC 24843) (Fission yeast).